The following is a 467-amino-acid chain: Cysteine--tRNA ligase (467 aa).

C30 is a binding site for Zn(2+). A 'HIGH' region motif is present at residues 32-42 (PTVYDDSHLGH). The Zn(2+) site is built by C209, H239, and E243. The 'KMSKS' region signature appears at 271–275 (KMSKS). K274 contributes to the ATP binding site.

It belongs to the class-I aminoacyl-tRNA synthetase family. Monomer. The cofactor is Zn(2+).

It is found in the cytoplasm. The catalysed reaction is tRNA(Cys) + L-cysteine + ATP = L-cysteinyl-tRNA(Cys) + AMP + diphosphate. This is Cysteine--tRNA ligase from Aliarcobacter butzleri (strain RM4018) (Arcobacter butzleri).